We begin with the raw amino-acid sequence, 403 residues long: S-arrestin (403 aa).

An interaction with RHO region spans residues 11 to 19; that stretch reads HVIFKKVSR. Position 231 is a phosphothreonine (threonine 231). The segment at 381–403 is disordered; the sequence is RQNLKDTGENTEGKKDEDAGQDE.

It belongs to the arrestin family. Monomer. Homodimer. Homotetramer. Interacts with RHO (via the phosphorylated C-terminus). Detected in retina (at protein level).

It localises to the cell projection. The protein localises to the cilium. It is found in the photoreceptor outer segment. The protein resides in the membrane. In terms of biological role, binds to photoactivated, phosphorylated RHO and terminates RHO signaling via G-proteins by competing with G-proteins for the same binding site on RHO. May play a role in preventing light-dependent degeneration of retinal photoreceptor cells. This chain is S-arrestin (Sag), found in Mus musculus (Mouse).